We begin with the raw amino-acid sequence, 291 residues long: Kidney mitochondrial carrier protein 1 (291 aa).

Serine 2 carries the post-translational modification N-acetylserine. 3 Solcar repeats span residues 7–96, 104–189, and 198–289; these read KPFV…LKRL, ETLL…TKKH, and DTVS…LKKL. Helical transmembrane passes span 9-26, 71-89, 106-124, 164-183, 204-224, and 264-283; these read FVYG…TFPI, GIAP…KIGT, LLIN…SAIA, GVSL…LPVY, FLSS…VDVV, and GFWP…FLTY.

Belongs to the mitochondrial carrier (TC 2.A.29) family. In terms of assembly, interacts with VDAC1.

It is found in the mitochondrion inner membrane. It carries out the reaction sulfite(in) + sulfate(out) = sulfite(out) + sulfate(in). It catalyses the reaction thiosulfate(in) + sulfate(out) = thiosulfate(out) + sulfate(in). The enzyme catalyses sulfate(out) + phosphate(in) = sulfate(in) + phosphate(out). The catalysed reaction is oxalate(in) + sulfate(out) = oxalate(out) + sulfate(in). It carries out the reaction malonate(in) + sulfate(out) = malonate(out) + sulfate(in). It catalyses the reaction maleate(in) + sulfate(out) = maleate(out) + sulfate(in). The enzyme catalyses (S)-malate(in) + sulfate(out) = (S)-malate(out) + sulfate(in). The catalysed reaction is (3S)-citramalate(in) + sulfate(out) = (3S)-citramalate(out) + sulfate(in). It carries out the reaction (3R)-citramalate(in) + sulfate(out) = (3R)-citramalate(out) + sulfate(in). It catalyses the reaction sulfate(out) + succinate(in) = sulfate(in) + succinate(out). The enzyme catalyses (S,S)-tartrate(in) + sulfate(out) = (S,S)-tartrate(out) + sulfate(in). The catalysed reaction is (2R,3R)-tartrate(in) + sulfate(out) = (2R,3R)-tartrate(out) + sulfate(in). It carries out the reaction D-aspartate(in) + sulfate(out) = D-aspartate(out) + sulfate(in). It catalyses the reaction L-aspartate(in) + sulfate(out) = L-aspartate(out) + sulfate(in). The enzyme catalyses sulfate(in) = sulfate(out). The catalysed reaction is phosphate(in) = phosphate(out). It carries out the reaction (S)-malate(out) = (S)-malate(in). Its function is as follows. Antiporter that transports inorganic anions (sulfate, sulfite, thiosulfate and phosphate) and, to a lesser extent, a variety of dicarboxylates (e.g. malonate, malate and citramalate) and, even more so, aspartate. The sulfate/sulfate exchange is much higher than the phosphate/phosphate and malate/malate exchanges. The transport affinities is higher for sulfate and thiosulfate than for any other substrate. May catalyze the export of sulfite and thiosulfate (the hydrogen sulfide degradation products) from the mitochondria, thereby modulating the level of the hydrogen sulfide. Also may mediate a very low unidirectional transport of sulfate, phosphate and (S)-malate. This is Kidney mitochondrial carrier protein 1 from Rattus norvegicus (Rat).